Consider the following 211-residue polypeptide: tRNA (guanine-N(7)-)-methyltransferase (211 aa).

Residues Glu-43, Asp-68, Asn-95, and Asn-117 each contribute to the S-adenosyl-L-methionine site. Position 121 (Lys-121) interacts with substrate. Positions 123 to 128 are interaction with RNA; the sequence is RHNKRR. Substrate contacts are provided by residues Asp-153 and 190 to 193; that span reads TEYE.

Belongs to the class I-like SAM-binding methyltransferase superfamily. TrmB family.

It carries out the reaction guanosine(46) in tRNA + S-adenosyl-L-methionine = N(7)-methylguanosine(46) in tRNA + S-adenosyl-L-homocysteine. It participates in tRNA modification; N(7)-methylguanine-tRNA biosynthesis. In terms of biological role, catalyzes the formation of N(7)-methylguanine at position 46 (m7G46) in tRNA. This is tRNA (guanine-N(7)-)-methyltransferase from Clostridium tetani (strain Massachusetts / E88).